The sequence spans 239 residues: tRNA (guanine-N(1)-)-methyltransferase (239 aa).

S-adenosyl-L-methionine contacts are provided by residues G110 and 130-135 (IGDYVL).

The protein belongs to the RNA methyltransferase TrmD family. Homodimer.

The protein localises to the cytoplasm. It carries out the reaction guanosine(37) in tRNA + S-adenosyl-L-methionine = N(1)-methylguanosine(37) in tRNA + S-adenosyl-L-homocysteine + H(+). In terms of biological role, specifically methylates guanosine-37 in various tRNAs. The polypeptide is tRNA (guanine-N(1)-)-methyltransferase (Borrelia garinii subsp. bavariensis (strain ATCC BAA-2496 / DSM 23469 / PBi) (Borreliella bavariensis)).